Here is a 199-residue protein sequence, read N- to C-terminus: V-type ATP synthase subunit E (199 aa).

Belongs to the V-ATPase E subunit family.

Functionally, produces ATP from ADP in the presence of a proton gradient across the membrane. This Borreliella burgdorferi (strain ATCC 35210 / DSM 4680 / CIP 102532 / B31) (Borrelia burgdorferi) protein is V-type ATP synthase subunit E (atpE).